The following is a 479-amino-acid chain: MSPQTETKASVGFKAGVKEYKLTYYTPEYETKDTDILAAFRVTPQPGVPPEEAGAAVAAESSTGTWTTVWTDGLTSLDRYKGRCYHIEPVPGEETQFIAYVAYPLDLFEEGSVTNMFTSIVGNVFGFKALAALRLEDLRIPPAYTKTFQGPPHGIQVERDKLNKYGRPLLGCTIKPKLGLSAKNYGRAVYECLRGGLDFTKDDENVNSQPFMRWRDRFLFCAEAIYKSQAETGEIKGHYLNATAGTCEEMIKRAVFARELGVPIVMHDYLTGGFTANTSLSHYCRDNGLLLHIHRAMHAVIDRQKNHGMHFRVLAKALRLSGGDHIHAGTVVGKLEGDRESTLGFVDLLRDDYVEKDRSRGIFFTQDWVSLPGVLPVASGGIHVWHMPALTEIFGDDSVLQFGGGTLGHPWGNAPGAVANRVALEACVQARNEGRDLAVEGNEIIREACKWSPELAAACEVWKEIRFNFPTIDKLDGQE.

The propeptide occupies 1–2 (MS). Substrate contacts are provided by Asn123 and Thr173. Residue Lys175 is the Proton acceptor of the active site. Lys177 is a binding site for substrate. Positions 201, 203, and 204 each coordinate Mg(2+). Lys201 is modified (N6-carboxylysine). Ser208 bears the Phosphoserine mark. His294 (proton acceptor) is an active-site residue. Substrate-binding residues include Arg295 and His327. Thr330 bears the Phosphothreonine mark. Substrate is bound at residue Ser379.

It belongs to the RuBisCO large chain family. Type I subfamily. In terms of assembly, heterohexadecamer of 8 large chains and 8 small chains; disulfide-linked. The disulfide link is formed within the large subunit homodimers. The cofactor is Mg(2+). In terms of processing, the disulfide bond which can form in the large chain dimeric partners within the hexadecamer appears to be associated with oxidative stress and protein turnover.

The protein resides in the plastid. Its subcellular location is the chloroplast. The catalysed reaction is 2 (2R)-3-phosphoglycerate + 2 H(+) = D-ribulose 1,5-bisphosphate + CO2 + H2O. It carries out the reaction D-ribulose 1,5-bisphosphate + O2 = 2-phosphoglycolate + (2R)-3-phosphoglycerate + 2 H(+). In terms of biological role, ruBisCO catalyzes two reactions: the carboxylation of D-ribulose 1,5-bisphosphate, the primary event in carbon dioxide fixation, as well as the oxidative fragmentation of the pentose substrate in the photorespiration process. Both reactions occur simultaneously and in competition at the same active site. This Capsella bursa-pastoris (Shepherd's purse) protein is Ribulose bisphosphate carboxylase large chain.